A 280-amino-acid chain; its full sequence is MDFMKPETVLDLGNIRDALVRMEDTIIFNFIERSQFYASPSVYKVNQFPIPNFDGSFLDWLLSQHERIHSQVRRYDAPDEVPFFPNVLEKTFLPKINYPSVLASYADEINVNKEILKIYTSEIVPGIAAGSGEQEDNLGSCAMADIECLQSLSRRIHFGRFVAEAKFISEGDKIVDLIKKRDVEGIEALITNAEVEKRILDRLLEKGRAYGTDPTLKFTQHIQSKVKPEVIVKIYKDFVIPLTKKVEVDYLLRRLEDEEDDDATQKSGGYVDRFLSSGLY.

Residues 3-256 (FMKPETVLDL…EVDYLLRRLE (254 aa)) form the Chorismate mutase domain. Positions 73, 74, 137, 139, and 140 each coordinate L-tyrosine. Positions 137, 139, and 140 each coordinate L-tryptophan.

As to quaternary structure, homodimer.

It localises to the cytoplasm. The catalysed reaction is chorismate = prephenate. The protein operates within metabolic intermediate biosynthesis; prephenate biosynthesis; prephenate from chorismate: step 1/1. Each dimer has two allosteric binding sites that can bind the regulatory effectors tryptophan or tyrosine. Can bind either one tryptophan or one tyrosine, two tryptophan or two tyrosine or one tryptophan and one tyrosine, which differentially affect the catalytic activity. Activated by tryptophan and subject to feedback inhibition by tyrosine. In the presence of both tryptophan and tyrosine, the enzyme is in the activated state. Functionally, catalyzes the Claisen rearrangement of chorismate to prephenate. Acts at the first branch point in the aromatic amino acid pathway where it steers biosynthesis towards phenylalanine and tyrosine, and away from tryptophan. The protein is Chorismate mutase of Pichia angusta (Yeast).